The sequence spans 208 residues: Ribosomal RNA large subunit methyltransferase E (208 aa).

G62, W64, D82, D98, and D123 together coordinate S-adenosyl-L-methionine. K163 serves as the catalytic Proton acceptor.

The protein belongs to the class I-like SAM-binding methyltransferase superfamily. RNA methyltransferase RlmE family.

Its subcellular location is the cytoplasm. It catalyses the reaction uridine(2552) in 23S rRNA + S-adenosyl-L-methionine = 2'-O-methyluridine(2552) in 23S rRNA + S-adenosyl-L-homocysteine + H(+). Functionally, specifically methylates the uridine in position 2552 of 23S rRNA at the 2'-O position of the ribose in the fully assembled 50S ribosomal subunit. This is Ribosomal RNA large subunit methyltransferase E from Glaesserella parasuis serovar 5 (strain SH0165) (Haemophilus parasuis).